A 114-amino-acid chain; its full sequence is Histone H2A.Z-specific chaperone chz-1 (114 aa).

Residues 1–22 (MSTENGTTDTTLAGTAEANTPF) show a composition bias toward polar residues. The interval 1-114 (MSTENGTTDT…FVPEDEEMEE (114 aa)) is disordered. Basic and acidic residues predominate over residues 24–40 (SKGKGKAAAESEDHPMG). 2 stretches are compositionally biased toward acidic residues: residues 41 to 68 (EAED…EEID) and 93 to 114 (PAEE…EMEE).

It belongs to the CHZ1 family. As to quaternary structure, forms a heterotrimer with H2A.Z-H2B, stabilizing the association of the histone dimer. Also, with a lower affinity, forms a heterotrimer with H2A-H2B.

The protein resides in the nucleus. Forms a chaperone-bound H2A.Z-H2B complex that acts as a source for SWR1 complex-dependent H2A to H2A.Z histone replacement in chromatin. The protein is Histone H2A.Z-specific chaperone chz-1 (chz-1) of Neurospora crassa (strain ATCC 24698 / 74-OR23-1A / CBS 708.71 / DSM 1257 / FGSC 987).